The chain runs to 319 residues: Ribonuclease Z (319 aa).

His62, His64, Asp66, His67, His139, Asp209, and His268 together coordinate Zn(2+). The Proton acceptor role is filled by Asp66.

The protein belongs to the RNase Z family. In terms of assembly, homodimer. It depends on Zn(2+) as a cofactor.

The catalysed reaction is Endonucleolytic cleavage of RNA, removing extra 3' nucleotides from tRNA precursor, generating 3' termini of tRNAs. A 3'-hydroxy group is left at the tRNA terminus and a 5'-phosphoryl group is left at the trailer molecule.. Functionally, zinc phosphodiesterase, which displays some tRNA 3'-processing endonuclease activity. Probably involved in tRNA maturation, by removing a 3'-trailer from precursor tRNA. The protein is Ribonuclease Z of Pseudomonas putida (strain GB-1).